A 181-amino-acid chain; its full sequence is Adenylate kinase 2 (181 aa).

ATP is bound at residue 10–15 (GSGKST). Positions 30-59 (SMGGILREAIANATPLGIKAKPYVERGDLL) are NMP. AMP-binding positions include Arg36, 57-59 (DLL), 85-88 (GYPR), and Gln92. The segment at 126 to 132 (NRSLFDD) is LID. Arg127 is a binding site for ATP. Arg140 contacts AMP. Position 168 (Pro168) interacts with ATP.

This sequence belongs to the adenylate kinase family. Monomer.

Its subcellular location is the cytoplasm. It carries out the reaction AMP + ATP = 2 ADP. The protein operates within purine metabolism; AMP biosynthesis via salvage pathway; AMP from ADP: step 1/1. In terms of biological role, catalyzes the reversible transfer of the terminal phosphate group between ATP and AMP. Plays an important role in cellular energy homeostasis and in adenine nucleotide metabolism. This chain is Adenylate kinase 2, found in Synechocystis sp. (strain ATCC 27184 / PCC 6803 / Kazusa).